Consider the following 149-residue polypeptide: D-aminoacyl-tRNA deacylase (149 aa).

Positions 137 to 138 match the Gly-cisPro motif, important for rejection of L-amino acids motif; the sequence is GP.

Belongs to the DTD family. In terms of assembly, homodimer.

Its subcellular location is the cytoplasm. The catalysed reaction is glycyl-tRNA(Ala) + H2O = tRNA(Ala) + glycine + H(+). It catalyses the reaction a D-aminoacyl-tRNA + H2O = a tRNA + a D-alpha-amino acid + H(+). In terms of biological role, an aminoacyl-tRNA editing enzyme that deacylates mischarged D-aminoacyl-tRNAs. Also deacylates mischarged glycyl-tRNA(Ala), protecting cells against glycine mischarging by AlaRS. Acts via tRNA-based rather than protein-based catalysis; rejects L-amino acids rather than detecting D-amino acids in the active site. By recycling D-aminoacyl-tRNA to D-amino acids and free tRNA molecules, this enzyme counteracts the toxicity associated with the formation of D-aminoacyl-tRNA entities in vivo and helps enforce protein L-homochirality. This is D-aminoacyl-tRNA deacylase from Pediococcus pentosaceus (strain ATCC 25745 / CCUG 21536 / LMG 10740 / 183-1w).